The sequence spans 234 residues: Probable pectate lyase F (234 aa).

Positions 1-17 are cleaved as a signal peptide; sequence MWSSIAAFPVLVPVALA.

The protein belongs to the polysaccharide lyase 3 family. Ca(2+) is required as a cofactor.

The protein resides in the secreted. It carries out the reaction Eliminative cleavage of (1-&gt;4)-alpha-D-galacturonan to give oligosaccharides with 4-deoxy-alpha-D-galact-4-enuronosyl groups at their non-reducing ends.. In terms of biological role, pectinolytic enzyme consist of four classes of enzymes: pectin lyase, polygalacturonase, pectin methylesterase and rhamnogalacturonase. Among pectinolytic enzymes, pectin lyase is the most important in depolymerization of pectin, since it cleaves internal glycosidic bonds of highly methylated pectins. Favors pectate, the anion, over pectin, the methyl ester. The polypeptide is Probable pectate lyase F (plyF) (Aspergillus fumigatus (strain ATCC MYA-4609 / CBS 101355 / FGSC A1100 / Af293) (Neosartorya fumigata)).